The chain runs to 378 residues: Pyrimidine monooxygenase RutA (378 aa).

FMN contacts are provided by residues 65–66 (IK), Asn-131, Glu-140, 156–157 (RY), and Ser-206.

Belongs to the NtaA/SnaA/DszA monooxygenase family. RutA subfamily.

It carries out the reaction uracil + FMNH2 + NADH + O2 = (Z)-3-ureidoacrylate + FMN + NAD(+) + H2O + H(+). The enzyme catalyses thymine + FMNH2 + NADH + O2 = (Z)-2-methylureidoacrylate + FMN + NAD(+) + H2O + H(+). Functionally, catalyzes the pyrimidine ring opening between N-3 and C-4 by an unusual flavin hydroperoxide-catalyzed mechanism, adding oxygen atoms in the process to yield ureidoacrylate peracid, that immediately reacts with FMN forming ureidoacrylate and FMN-N(5)-oxide. The FMN-N(5)-oxide reacts spontaneously with NADH to produce FMN. Requires the flavin reductase RutF to regenerate FMN in vivo. The protein is Pyrimidine monooxygenase RutA of Cronobacter turicensis (strain DSM 18703 / CCUG 55852 / LMG 23827 / z3032).